Consider the following 256-residue polypeptide: Hydroxyacylglutathione hydrolase (256 aa).

Residues His-57, His-59, Asp-61, His-62, His-115, Asp-134, and His-172 each contribute to the Zn(2+) site.

The protein belongs to the metallo-beta-lactamase superfamily. Glyoxalase II family. In terms of assembly, monomer. Requires Zn(2+) as cofactor.

It catalyses the reaction an S-(2-hydroxyacyl)glutathione + H2O = a 2-hydroxy carboxylate + glutathione + H(+). It participates in secondary metabolite metabolism; methylglyoxal degradation; (R)-lactate from methylglyoxal: step 2/2. Its function is as follows. Thiolesterase that catalyzes the hydrolysis of S-D-lactoyl-glutathione to form glutathione and D-lactic acid. The protein is Hydroxyacylglutathione hydrolase of Jannaschia sp. (strain CCS1).